We begin with the raw amino-acid sequence, 174 residues long: Co-chaperone protein HscB homolog (174 aa).

One can recognise a J domain in the interval 2–74; that stretch reads NYFELFKFSP…IRRAEHMLSL (73 aa).

Belongs to the HscB family. As to quaternary structure, interacts with HscA and stimulates its ATPase activity.

In terms of biological role, co-chaperone involved in the maturation of iron-sulfur cluster-containing proteins. Seems to help targeting proteins to be folded toward HscA. The chain is Co-chaperone protein HscB homolog from Shewanella baltica (strain OS185).